We begin with the raw amino-acid sequence, 334 residues long: Ferredoxin--NADP reductase (334 aa).

Residues Asp33, Gln41, Tyr46, Ala86, Phe120, Asp286, and Thr327 each coordinate FAD.

It belongs to the ferredoxin--NADP reductase type 2 family. In terms of assembly, homodimer. The cofactor is FAD.

The catalysed reaction is 2 reduced [2Fe-2S]-[ferredoxin] + NADP(+) + H(+) = 2 oxidized [2Fe-2S]-[ferredoxin] + NADPH. In Rickettsia typhi (strain ATCC VR-144 / Wilmington), this protein is Ferredoxin--NADP reductase.